The sequence spans 410 residues: uncharacterized protein (410 aa).

11-39 (VLVIGGGPSGTALSAELAARGLDVQQLAP) lines the NAD(+) pocket.

It belongs to the lycopene cyclase family.

This is an uncharacterized protein from Deinococcus radiodurans (strain ATCC 13939 / DSM 20539 / JCM 16871 / CCUG 27074 / LMG 4051 / NBRC 15346 / NCIMB 9279 / VKM B-1422 / R1).